The sequence spans 37 residues: Photosystem I reaction center subunit VIII (37 aa).

The helical transmembrane segment at 7-27 (LPSFFVPLVGLVFPAIAMASL) threads the bilayer.

Belongs to the PsaI family.

The protein resides in the plastid. The protein localises to the chloroplast thylakoid membrane. May help in the organization of the PsaL subunit. This chain is Photosystem I reaction center subunit VIII, found in Eucalyptus globulus subsp. globulus (Tasmanian blue gum).